A 308-amino-acid polypeptide reads, in one-letter code: Acetyl-coenzyme A carboxylase carboxyl transferase subunit beta (308 aa).

In terms of domain architecture, CoA carboxyltransferase N-terminal spans 25 to 294; the sequence is VWTKCTSCEQ…PLVVSVNDSP (270 aa). C29, C32, C48, and C51 together coordinate Zn(2+). The C4-type zinc-finger motif lies at 29–51; it reads CTSCEQVLYHAELERNLEVCPKC.

Belongs to the AccD/PCCB family. As to quaternary structure, acetyl-CoA carboxylase is a heterohexamer composed of biotin carboxyl carrier protein (AccB), biotin carboxylase (AccC) and two subunits each of ACCase subunit alpha (AccA) and ACCase subunit beta (AccD). Requires Zn(2+) as cofactor.

It localises to the cytoplasm. The catalysed reaction is N(6)-carboxybiotinyl-L-lysyl-[protein] + acetyl-CoA = N(6)-biotinyl-L-lysyl-[protein] + malonyl-CoA. Its pathway is lipid metabolism; malonyl-CoA biosynthesis; malonyl-CoA from acetyl-CoA: step 1/1. Functionally, component of the acetyl coenzyme A carboxylase (ACC) complex. Biotin carboxylase (BC) catalyzes the carboxylation of biotin on its carrier protein (BCCP) and then the CO(2) group is transferred by the transcarboxylase to acetyl-CoA to form malonyl-CoA. This is Acetyl-coenzyme A carboxylase carboxyl transferase subunit beta from Vibrio vulnificus (strain CMCP6).